Reading from the N-terminus, the 249-residue chain is tRNA (guanine-N(1)-)-methyltransferase (249 aa).

S-adenosyl-L-methionine contacts are provided by residues glycine 112 and 132–137 (LGDFVL).

This sequence belongs to the RNA methyltransferase TrmD family. Homodimer.

It is found in the cytoplasm. The catalysed reaction is guanosine(37) in tRNA + S-adenosyl-L-methionine = N(1)-methylguanosine(37) in tRNA + S-adenosyl-L-homocysteine + H(+). Specifically methylates guanosine-37 in various tRNAs. This chain is tRNA (guanine-N(1)-)-methyltransferase, found in Citrifermentans bemidjiense (strain ATCC BAA-1014 / DSM 16622 / JCM 12645 / Bem) (Geobacter bemidjiensis).